We begin with the raw amino-acid sequence, 82 residues long: Sec-independent protein translocase protein TatA (82 aa).

Residues Met1–Gly21 form a helical membrane-spanning segment. The disordered stretch occupies residues Val43–Asp82.

It belongs to the TatA/E family. The Tat system comprises two distinct complexes: a TatABC complex, containing multiple copies of TatA, TatB and TatC subunits, and a separate TatA complex, containing only TatA subunits. Substrates initially bind to the TatABC complex, which probably triggers association of the separate TatA complex to form the active translocon.

The protein localises to the cell inner membrane. In terms of biological role, part of the twin-arginine translocation (Tat) system that transports large folded proteins containing a characteristic twin-arginine motif in their signal peptide across membranes. TatA could form the protein-conducting channel of the Tat system. This Pseudomonas aeruginosa (strain LESB58) protein is Sec-independent protein translocase protein TatA.